A 40-amino-acid chain; its full sequence is Esterase-4 (40 aa).

The protein belongs to the type-B carboxylesterase/lipase family.

The enzyme catalyses a carboxylic ester + H2O = an alcohol + a carboxylate + H(+). This Drosophila mojavensis (Fruit fly) protein is Esterase-4 (Est-4).